Consider the following 538-residue polypeptide: Bifunctional purine biosynthesis protein PurH (538 aa).

An MGS-like domain is found at 8–158 (IPAPDKVKIR…KNHAYVTVVT (151 aa)).

This sequence belongs to the PurH family.

The catalysed reaction is (6R)-10-formyltetrahydrofolate + 5-amino-1-(5-phospho-beta-D-ribosyl)imidazole-4-carboxamide = 5-formamido-1-(5-phospho-D-ribosyl)imidazole-4-carboxamide + (6S)-5,6,7,8-tetrahydrofolate. It carries out the reaction IMP + H2O = 5-formamido-1-(5-phospho-D-ribosyl)imidazole-4-carboxamide. Its pathway is purine metabolism; IMP biosynthesis via de novo pathway; 5-formamido-1-(5-phospho-D-ribosyl)imidazole-4-carboxamide from 5-amino-1-(5-phospho-D-ribosyl)imidazole-4-carboxamide (10-formyl THF route): step 1/1. It functions in the pathway purine metabolism; IMP biosynthesis via de novo pathway; IMP from 5-formamido-1-(5-phospho-D-ribosyl)imidazole-4-carboxamide: step 1/1. This chain is Bifunctional purine biosynthesis protein PurH, found in Agrobacterium fabrum (strain C58 / ATCC 33970) (Agrobacterium tumefaciens (strain C58)).